Reading from the N-terminus, the 376-residue chain is Ribonucleoside-diphosphate reductase subunit beta (376 aa).

3 residues coordinate Fe cation: D85, E116, and H119. Y123 is an active-site residue. Fe cation contacts are provided by E205, E239, and H242.

It belongs to the ribonucleoside diphosphate reductase small chain family. In terms of assembly, tetramer of two alpha and two beta subunits. Fe cation serves as cofactor.

It catalyses the reaction a 2'-deoxyribonucleoside 5'-diphosphate + [thioredoxin]-disulfide + H2O = a ribonucleoside 5'-diphosphate + [thioredoxin]-dithiol. Its function is as follows. Provides the precursors necessary for DNA synthesis. Catalyzes the biosynthesis of deoxyribonucleotides from the corresponding ribonucleotides. The sequence is that of Ribonucleoside-diphosphate reductase subunit beta (nrdB) from Buchnera aphidicola subsp. Baizongia pistaciae (strain Bp).